Consider the following 75-residue polypeptide: Kappa-scoloptoxin(03)-Ssm1e (75 aa).

A signal peptide spans 1-23; it reads MKSSMAILLVMALIIFTLDKNYS.

The protein belongs to the scoloptoxin-03 family. Post-translationally, contains 3 disulfide bonds. In terms of tissue distribution, expressed by the venom gland.

It localises to the secreted. Functionally, inhibits voltage-gated potassium channels. The polypeptide is Kappa-scoloptoxin(03)-Ssm1e (Scolopendra mutilans (Chinese red-headed centipede)).